The following is a 328-amino-acid chain: Nodulation protein Z (328 aa).

One can recognise a GT23 domain in the interval 6–317; that stretch reads CPEGRSVISR…FDLARGVFCQ (312 aa).

It belongs to the glycosyltransferase 23 family.

Functionally, fucosyltransferase which adds the fucose moiety of the nod factor on its terminal reducing N-acetylglucosamine end. Uses GDP-fucose as the donor group. The sequence is that of Nodulation protein Z (nodZ) from Azorhizobium caulinodans (strain ATCC 43989 / DSM 5975 / JCM 20966 / LMG 6465 / NBRC 14845 / NCIMB 13405 / ORS 571).